We begin with the raw amino-acid sequence, 119 residues long: Large ribosomal subunit protein uL24 (119 aa).

It belongs to the universal ribosomal protein uL24 family. As to quaternary structure, part of the 50S ribosomal subunit.

Its function is as follows. One of two assembly initiator proteins, it binds directly to the 5'-end of the 23S rRNA, where it nucleates assembly of the 50S subunit. Functionally, located at the polypeptide exit tunnel on the outside of the subunit. The polypeptide is Large ribosomal subunit protein uL24 (Methanococcus vannielii).